The following is a 178-amino-acid chain: MNPLLQDYARILLEWNQTHNLSGAKCLSELEPQITDALKPLEFIKDFKSCLDIGSGAGLPAIPLALEKPEVKFILLEPRIKRAAFLNYLKSVLPLKNIEIIKKRLENYQSPLQVDLITSRAVASSSFLIEKSQRFLKDKGYFLFYKGEQLKDEIACKDTECFMHQKRVYFYKSKESLC.

Residues Gly-54, Leu-59, 105-106 (LE), and Arg-120 each bind S-adenosyl-L-methionine.

Belongs to the methyltransferase superfamily. RNA methyltransferase RsmG family.

It localises to the cytoplasm. The enzyme catalyses guanosine(527) in 16S rRNA + S-adenosyl-L-methionine = N(7)-methylguanosine(527) in 16S rRNA + S-adenosyl-L-homocysteine. In terms of biological role, specifically methylates the N7 position of guanine in position 527 of 16S rRNA. This chain is Ribosomal RNA small subunit methyltransferase G, found in Helicobacter pylori (strain HPAG1).